Consider the following 843-residue polypeptide: Glycogen phosphorylase, muscle form (843 aa).

The residue at position 2 (Ser-2) is an N-acetylserine. Ser-15 bears the Phosphoserine; by PHK; in form phosphorylase A mark. Positions 43 and 76 each coordinate AMP. 2 positions are modified to phosphotyrosine: Tyr-204 and Tyr-227. 310 to 319 (RRFKSSKFGC) contributes to the AMP binding site. Ser-430 is modified (phosphoserine). Tyr-473 carries the post-translational modification Phosphotyrosine. Residue Ser-514 is modified to Phosphoserine. N6-(pyridoxal phosphate)lysine is present on Lys-681. Ser-747 and Ser-748 each carry phosphoserine.

The protein belongs to the glycogen phosphorylase family. Homodimer. Homotetramer; to form the enzymatically active phosphorylase A. The cofactor is pyridoxal 5'-phosphate. Phosphorylation of Ser-15 converts phosphorylase B (unphosphorylated) to phosphorylase A.

The catalysed reaction is [(1-&gt;4)-alpha-D-glucosyl](n) + phosphate = [(1-&gt;4)-alpha-D-glucosyl](n-1) + alpha-D-glucose 1-phosphate. With respect to regulation, allosterically regulated through the non-covalent binding of metabolites, being activated by AMP and inhibited by ATP, ADP, and glucose-6-phosphate. The activity is also controlled by post-translational modifications including phosphorylation. Functionally, allosteric enzyme that catalyzes the rate-limiting step in glycogen catabolism, the phosphorolytic cleavage of glycogen to produce glucose-1-phosphate, and plays a central role in maintaining cellular and organismal glucose homeostasis. The sequence is that of Glycogen phosphorylase, muscle form from Oryctolagus cuniculus (Rabbit).